The following is a 500-amino-acid chain: Cysteine--tRNA ligase (500 aa).

Cys-29 provides a ligand contact to Zn(2+). The 'HIGH' region motif lies at 31-41 (VTVYDLCHLGH). 3 residues coordinate Zn(2+): Cys-213, His-238, and Glu-242. Residues 270 to 274 (KMSKS) carry the 'KMSKS' region motif. Lys-273 is an ATP binding site.

It belongs to the class-I aminoacyl-tRNA synthetase family. As to quaternary structure, monomer. Zn(2+) serves as cofactor.

It is found in the cytoplasm. It carries out the reaction tRNA(Cys) + L-cysteine + ATP = L-cysteinyl-tRNA(Cys) + AMP + diphosphate. The chain is Cysteine--tRNA ligase from Prochlorococcus marinus (strain NATL1A).